The primary structure comprises 476 residues: Immune evasion protein OPG047 (476 aa).

In terms of domain architecture, BTB spans 10 to 90 (CKNILALSMT…SYTGKVYIDS (81 aa)). The region spanning 125–218 (CVECYMMGIE…SNYLSPRGIN (94 aa)) is the BACK domain. 5 Kelch repeats span residues 269 to 315 (VVYL…PANN), 316 to 359 (KLYV…SINN), 361 to 404 (IYVM…VFGR), 406 to 443 (LFLVGRNAEFYCESSNTWTLIDDPIYPRDNPELIIVDN), and 444 to 476 (KLLLIGGFYRESYIDTIEVYNHHTYSWNIWDGK).

It belongs to the orthopoxvirus OPG047 family.

In terms of biological role, might have a role in the suppression of host immune response. The chain is Immune evasion protein OPG047 (OPG047) from Vaccinia virus (strain Ankara) (VACV).